The chain runs to 508 residues: Photosystem II CP47 reaction center protein (508 aa).

Helical transmembrane passes span 21 to 36 (SVHI…WAGS), 101 to 115 (IVFS…IWHW), 140 to 156 (GIHL…FGAF), 203 to 218 (IAAG…FHLS), 237 to 252 (VLSS…AFVV), and 457 to 472 (SFAL…HGAR).

It belongs to the PsbB/PsbC family. PsbB subfamily. As to quaternary structure, PSII is composed of 1 copy each of membrane proteins PsbA, PsbB, PsbC, PsbD, PsbE, PsbF, PsbH, PsbI, PsbJ, PsbK, PsbL, PsbM, PsbT, PsbX, PsbY, PsbZ, Psb30/Ycf12, at least 3 peripheral proteins of the oxygen-evolving complex and a large number of cofactors. It forms dimeric complexes. Binds multiple chlorophylls. PSII binds additional chlorophylls, carotenoids and specific lipids. is required as a cofactor.

It is found in the plastid. It localises to the chloroplast thylakoid membrane. Its function is as follows. One of the components of the core complex of photosystem II (PSII). It binds chlorophyll and helps catalyze the primary light-induced photochemical processes of PSII. PSII is a light-driven water:plastoquinone oxidoreductase, using light energy to abstract electrons from H(2)O, generating O(2) and a proton gradient subsequently used for ATP formation. The polypeptide is Photosystem II CP47 reaction center protein (Gossypium barbadense (Sea Island cotton)).